The following is a 561-amino-acid chain: Urocanate hydratase (561 aa).

Residues 52-53 (GG), glutamine 130, 176-178 (GMG), glutamate 196, arginine 201, 242-243 (NA), 263-267 (QTSAH), 273-274 (YL), and tyrosine 322 contribute to the NAD(+) site. Cysteine 410 is a catalytic residue. Glycine 492 lines the NAD(+) pocket.

This sequence belongs to the urocanase family. Requires NAD(+) as cofactor.

It localises to the cytoplasm. The catalysed reaction is 4-imidazolone-5-propanoate = trans-urocanate + H2O. It participates in amino-acid degradation; L-histidine degradation into L-glutamate; N-formimidoyl-L-glutamate from L-histidine: step 2/3. Its function is as follows. Catalyzes the conversion of urocanate to 4-imidazolone-5-propionate. This chain is Urocanate hydratase, found in Salmonella arizonae (strain ATCC BAA-731 / CDC346-86 / RSK2980).